A 358-amino-acid polypeptide reads, in one-letter code: 3-dehydroquinate synthase (358 aa).

NAD(+) contacts are provided by residues 105 to 109 (GVVGD), 129 to 130 (TT), Lys-142, Lys-151, and 169 to 172 (TLKT). Glu-184, His-245, and His-262 together coordinate Zn(2+).

This sequence belongs to the sugar phosphate cyclases superfamily. Dehydroquinate synthase family. NAD(+) serves as cofactor. It depends on Co(2+) as a cofactor. The cofactor is Zn(2+).

It is found in the cytoplasm. The catalysed reaction is 7-phospho-2-dehydro-3-deoxy-D-arabino-heptonate = 3-dehydroquinate + phosphate. It functions in the pathway metabolic intermediate biosynthesis; chorismate biosynthesis; chorismate from D-erythrose 4-phosphate and phosphoenolpyruvate: step 2/7. In terms of biological role, catalyzes the conversion of 3-deoxy-D-arabino-heptulosonate 7-phosphate (DAHP) to dehydroquinate (DHQ). The polypeptide is 3-dehydroquinate synthase (Enterococcus faecalis (strain ATCC 700802 / V583)).